Consider the following 490-residue polypeptide: Acetyl-coenzyme A carboxylase carboxyl transferase subunit beta, chloroplastic (490 aa).

The 263-residue stretch at leucine 228–asparagine 490 folds into the CoA carboxyltransferase N-terminal domain. Positions 232, 235, 251, and 254 each coordinate Zn(2+). The C4-type zinc finger occupies cysteine 232–cysteine 254.

The protein belongs to the AccD/PCCB family. As to quaternary structure, acetyl-CoA carboxylase is a heterohexamer composed of biotin carboxyl carrier protein, biotin carboxylase and 2 subunits each of ACCase subunit alpha and ACCase plastid-coded subunit beta (accD). The cofactor is Zn(2+).

The protein localises to the plastid. Its subcellular location is the chloroplast stroma. The catalysed reaction is N(6)-carboxybiotinyl-L-lysyl-[protein] + acetyl-CoA = N(6)-biotinyl-L-lysyl-[protein] + malonyl-CoA. It participates in lipid metabolism; malonyl-CoA biosynthesis; malonyl-CoA from acetyl-CoA: step 1/1. Functionally, component of the acetyl coenzyme A carboxylase (ACC) complex. Biotin carboxylase (BC) catalyzes the carboxylation of biotin on its carrier protein (BCCP) and then the CO(2) group is transferred by the transcarboxylase to acetyl-CoA to form malonyl-CoA. The chain is Acetyl-coenzyme A carboxylase carboxyl transferase subunit beta, chloroplastic from Eucalyptus globulus subsp. globulus (Tasmanian blue gum).